The sequence spans 226 residues: Deoxyribose-phosphate aldolase (226 aa).

Catalysis depends on D96, which acts as the Proton donor/acceptor. K157 serves as the catalytic Schiff-base intermediate with acetaldehyde. K185 serves as the catalytic Proton donor/acceptor.

The protein belongs to the DeoC/FbaB aldolase family. DeoC type 1 subfamily.

It localises to the cytoplasm. The enzyme catalyses 2-deoxy-D-ribose 5-phosphate = D-glyceraldehyde 3-phosphate + acetaldehyde. It participates in carbohydrate degradation; 2-deoxy-D-ribose 1-phosphate degradation; D-glyceraldehyde 3-phosphate and acetaldehyde from 2-deoxy-alpha-D-ribose 1-phosphate: step 2/2. In terms of biological role, catalyzes a reversible aldol reaction between acetaldehyde and D-glyceraldehyde 3-phosphate to generate 2-deoxy-D-ribose 5-phosphate. This chain is Deoxyribose-phosphate aldolase, found in Trichormus variabilis (strain ATCC 29413 / PCC 7937) (Anabaena variabilis).